We begin with the raw amino-acid sequence, 437 residues long: Nuclear hormone receptor family member nhr-100 (437 aa).

Residues 21-96 (DTSCLVCGDP…VGMDANAVRS (76 aa)) constitute a DNA-binding region (nuclear receptor). 2 NR C4-type zinc fingers span residues 24 to 44 (CLVC…CNGC) and 60 to 79 (CSFN…CRAC). In terms of domain architecture, NR LBD spans 141-409 (QTKEIIAHML…SGGGLPYDIH (269 aa)).

The protein belongs to the nuclear hormone receptor family.

It is found in the nucleus. In terms of biological role, orphan nuclear receptor. The polypeptide is Nuclear hormone receptor family member nhr-100 (nhr-100) (Caenorhabditis elegans).